The chain runs to 111 residues: Sulditoxin subunit B (111 aa).

Residues 1–19 form the signal peptide; sequence MKTLLLALAVVVLVCLGSA. The propeptide occupies 20 to 34; the sequence is NELGLGRQQIDRGRR. Residue Q35 is modified to Pyrrolidone carboxylic acid. 5 cysteine pairs are disulfide-bonded: C44-C68, C47-C55, C61-C87, C91-C102, and C103-C108.

It belongs to the three-finger toxin family. Ancestral subfamily. Boigatoxin sub-subfamily. In terms of assembly, heterodimer of sulditoxin subunits A and B; probably disulfide-linked. Expressed by the venom gland.

It is found in the secreted. Functionally, reptile-specific neurotoxin (tested on geckos). Inhibits nicotinic acetylcholine receptor (nAChR). Not toxic to mammals (tested on mice). The chain is Sulditoxin subunit B from Spilotes sulphureus (Amazon puffing snake).